A 1024-amino-acid chain; its full sequence is Protein tiptop (1024 aa).

The span at 20 to 35 shows a compositional bias: polar residues; sequence ELTSPRCQSRDSNTSA. 2 disordered regions span residues 20–40 and 138–215; these read ELTS…AGAG and EGEV…ISAD. Over residues 159–175 the composition is skewed to acidic residues; that stretch reads DDQEEDQEQDQEQEQEQ. The C2H2-type 1 zinc finger occupies 317–341; the sequence is FKCVWCKQSFSTLANLTAHMKETQH. Residues 350-392 form a disordered region; the sequence is LPTGGVGTPSAPPPTRLATSASNSACSSSSSSTSSSSNSSKSE. A compositionally biased stretch (low complexity) spans 368–391; sequence TSASNSACSSSSSSTSSSSNSSKS. The C2H2-type 2 zinc-finger motif lies at 426-450; it reads LKCMWCGQSFRSLAEMTSHMQETQH. Disordered regions lie at residues 466–489, 519–576, 712–759, 786–818, and 868–891; these read GDER…SSPS, AQKS…SLDS, SRDR…IKAE, FSME…SLLA, and ETTD…ASAT. Residues 477-489 show a composition bias toward low complexity; the sequence is VPSTSTAAPSSPS. The C2H2-type 3 zinc finger occupies 499–523; sequence LTCKVCDQAFGSLKELSTHMAQKSH. Over residues 527 to 537 the composition is skewed to low complexity; sequence SPAPSASPPAA. Basic residues predominate over residues 543–558; that stretch reads KRGRQNRNEKRKKSLP. Low complexity predominate over residues 718 to 729; it reads SESSSASRVESS. Positions 745–755 are enriched in pro residues; that stretch reads TPAPPPPPPPT. A compositionally biased stretch (basic and acidic residues) spans 786-795; sequence FSMEACRESP. Positions 796-808 are enriched in polar residues; the sequence is RSVSKSPAPQTER. Positions 874–891 are enriched in low complexity; that stretch reads STGLRSASSAGSSTASAT. Residues 926–949 form a C2H2-type 4 zinc finger; that stretch reads IKCSYCDTPFASKGAYRHHLSKVH. The interval 954-1004 is disordered; the sequence is AGEDSPRLKSPAVQSPRSMPLASPRRSASRSPATGSQQPPPSPTISPYDES. A compositionally biased stretch (low complexity) spans 968 to 990; the sequence is SPRSMPLASPRRSASRSPATGSQ.

It belongs to the teashirt C2H2-type zinc-finger protein family. As to expression, expression in the Malpighian tubules (MTs) and stomatogastric nervous system starts at embryonic stage 10. At stage 11, expression in the head domain is initiated in the clypeolabrum in two bilaterally symmetric clusters of cells. At stage 12, expression appears in the central nervous system (CNS) of the trunk and the epidermis. The staining in the hindgut is maintained throughout embryogenesis. At stage 13, expression is present in elongating MTs. The anterior staining is detected in cells that invaginate into the stomodeum and by stage 15 onwards, in cells close to the pharynx. Also expressed in cells of the brain, the second constriction of the gut, the trunk epidermis, the anterior segments of the CNS (the three thoracic and the first two abdominal segments) and in the MTs. From stage 12 onwards, tsh and tio are colocalized in some cells.

Its subcellular location is the nucleus. Its function is as follows. Tiptop (tio) and teashirt (tsh) have, on the whole, common activities. Tio and tsh repress each other's expression and tsh has a crucial role for trunk patterning that is in part masked by ectopic expression of tiptop. Both genes share a common activity required for the activation of Ser and svb and the maintenance of en and wg. The polypeptide is Protein tiptop (tio) (Drosophila melanogaster (Fruit fly)).